Reading from the N-terminus, the 763-residue chain is Thyrotropin receptor (763 aa).

A signal peptide spans Met-1–Gly-21. At Lys-22–Gly-412 the chain is on the extracellular side. Residues Cys-31 and Cys-41 are joined by a disulfide bond. N-linked (GlcNAc...) asparagine glycosylation is found at Asn-77 and Asn-99. LRR repeat units follow at residues Leu-100–Glu-124, Leu-125–Thr-150, Asp-151–Gly-174, Cys-176–Gly-199, Lys-201–Gly-223, Tyr-225–His-248, and Pro-264–Asn-288. N-linked (GlcNAc...) asparagine glycosylation is found at Asn-177 and Asn-198. Residue Asn-302 is glycosylated (N-linked (GlcNAc...) asparagine). The residue at position 384 (Tyr-384) is a Sulfotyrosine. The chain crosses the membrane as a helical span at residues Tyr-413 to Thr-440. Residues Ser-441–Arg-449 are Cytoplasmic-facing. Residues Phe-450–Val-472 traverse the membrane as a helical segment. Topologically, residues Asp-473 to Cys-493 are extracellular. A disulfide bridge connects residues Cys-493 and Cys-568. A helical membrane pass occupies residues Asn-494–Leu-516. Residues Glu-517–His-536 lie on the Cytoplasmic side of the membrane. A helical transmembrane segment spans residues Ala-537–Ile-559. Residues Ser-560–Leu-579 are Extracellular-facing. A helical transmembrane segment spans residues Ala-580–Val-601. Over Lys-602–Arg-624 the chain is Cytoplasmic. Residues Met-625–Met-648 form a helical membrane-spanning segment. The Extracellular segment spans residues Asn-649–Lys-659. A helical transmembrane segment spans residues Ile-660–Thr-681. Residues Lys-682–Leu-763 lie on the Cytoplasmic side of the membrane. A PDZ-binding motif is present at residues Thr-761–Leu-763.

It belongs to the G-protein coupled receptor 1 family. FSH/LSH/TSH subfamily. As to quaternary structure, interacts with heterodimer GPHA2:GPHB5; this interaction stimulates cAMP production. Interacts (via the PDZ-binding motif) with SCRIB; regulates TSHR trafficking and function. Glycosylated. Post-translationally, sulfated. Sulfation on Tyr-384 plays a role in thyrotropin receptor binding and activation.

It localises to the cell membrane. The protein resides in the basolateral cell membrane. Functionally, receptor for the thyroid-stimulating hormone (TSH) or thyrotropin. Also acts as a receptor for the heterodimeric glycoprotein hormone (GPHA2:GPHB5) or thyrostimulin. The activity of this receptor is mediated by G proteins which activate adenylate cyclase. Plays a central role in controlling thyroid cell metabolism. This is Thyrotropin receptor (TSHR) from Felis catus (Cat).